The sequence spans 235 residues: MANTALIGCTGMVGSFILNNLLAHPSVARVDTISRRTPQAASAAQTKLTTIVSDDTSRWASELSSLTPTPSIFFSAFATTRASAGGFENQYKIEHGLNVEMARAARDAGTKVYVLISSAGADKNAYFAYPRMKAEIEEDVKALGFERTVILRPGLIAGQREESRPMEAAIRCIAGFAGKIHSGLKDGWAQEADVIARAAVNAGLKALEGDVPTGSEKVWVLGGSDIIKYGAGSKN.

The transit peptide at 1-36 directs the protein to the mitochondrion; sequence MANTALIGCTGMVGSFILNNLLAHPSVARVDTISRR.

This sequence belongs to the FMP52 family.

It localises to the mitochondrion outer membrane. The sequence is that of Protein fmp52-1, mitochondrial (fmp521) from Aspergillus oryzae (strain ATCC 42149 / RIB 40) (Yellow koji mold).